A 681-amino-acid chain; its full sequence is DNA ligase (681 aa).

NAD(+)-binding positions include aspartate 32–aspartate 36, serine 81–leucine 82, and glutamate 113. The N6-AMP-lysine intermediate role is filled by lysine 115. NAD(+)-binding residues include arginine 136, glutamate 173, lysine 290, and lysine 314. Residues cysteine 408, cysteine 411, cysteine 426, and cysteine 432 each coordinate Zn(2+). Residues glutamate 596–leucine 681 enclose the BRCT domain.

Belongs to the NAD-dependent DNA ligase family. LigA subfamily. The cofactor is Mg(2+). It depends on Mn(2+) as a cofactor.

The catalysed reaction is NAD(+) + (deoxyribonucleotide)n-3'-hydroxyl + 5'-phospho-(deoxyribonucleotide)m = (deoxyribonucleotide)n+m + AMP + beta-nicotinamide D-nucleotide.. DNA ligase that catalyzes the formation of phosphodiester linkages between 5'-phosphoryl and 3'-hydroxyl groups in double-stranded DNA using NAD as a coenzyme and as the energy source for the reaction. It is essential for DNA replication and repair of damaged DNA. This chain is DNA ligase, found in Pectobacterium atrosepticum (strain SCRI 1043 / ATCC BAA-672) (Erwinia carotovora subsp. atroseptica).